A 110-amino-acid chain; its full sequence is NADH dehydrogenase [ubiquinone] iron-sulfur protein 6, mitochondrial (110 aa).

The N-terminal 22 residues, Met1–Phe22, are a transit peptide targeting the mitochondrion.

It belongs to the complex I NDUFS6 subunit family. As to quaternary structure, complex I is composed of at least 49 different subunits. This is a component of the iron-sulfur (IP) fragment of the enzyme.

It localises to the mitochondrion inner membrane. Functionally, accessory subunit of the mitochondrial membrane respiratory chain NADH dehydrogenase (Complex I), that is believed not to be involved in catalysis. Complex I functions in the transfer of electrons from NADH to the respiratory chain. The immediate electron acceptor for the enzyme is believed to be ubiquinone. This chain is NADH dehydrogenase [ubiquinone] iron-sulfur protein 6, mitochondrial, found in Arabidopsis thaliana (Mouse-ear cress).